A 445-amino-acid polypeptide reads, in one-letter code: Phosphoglucosamine mutase (445 aa).

Ser-102 acts as the Phosphoserine intermediate in catalysis. Mg(2+)-binding residues include Ser-102, Asp-241, Asp-243, and Asp-245. Ser-102 carries the phosphoserine modification.

Belongs to the phosphohexose mutase family. The cofactor is Mg(2+). Post-translationally, activated by phosphorylation.

The enzyme catalyses alpha-D-glucosamine 1-phosphate = D-glucosamine 6-phosphate. In terms of biological role, catalyzes the conversion of glucosamine-6-phosphate to glucosamine-1-phosphate. This Escherichia coli (strain 55989 / EAEC) protein is Phosphoglucosamine mutase.